Consider the following 551-residue polypeptide: Methionine--tRNA ligase (551 aa).

The 'HIGH' region signature appears at 12 to 22 (PYANGPLHFGH). The Zn(2+) site is built by Cys144, Cys147, Cys157, and Cys160. A 'KMSKS' region motif is present at residues 330–334 (QFSKS). Lys333 is an ATP binding site.

This sequence belongs to the class-I aminoacyl-tRNA synthetase family. MetG type 1 subfamily. As to quaternary structure, monomer. Requires Zn(2+) as cofactor.

The protein resides in the cytoplasm. The enzyme catalyses tRNA(Met) + L-methionine + ATP = L-methionyl-tRNA(Met) + AMP + diphosphate. In terms of biological role, is required not only for elongation of protein synthesis but also for the initiation of all mRNA translation through initiator tRNA(fMet) aminoacylation. This is Methionine--tRNA ligase (metG) from Chlamydia pneumoniae (Chlamydophila pneumoniae).